Consider the following 179-residue polypeptide: ATP synthase subunit delta (179 aa).

This sequence belongs to the ATPase delta chain family. As to quaternary structure, F-type ATPases have 2 components, F(1) - the catalytic core - and F(0) - the membrane proton channel. F(1) has five subunits: alpha(3), beta(3), gamma(1), delta(1), epsilon(1). F(0) has three main subunits: a(1), b(2) and c(10-14). The alpha and beta chains form an alternating ring which encloses part of the gamma chain. F(1) is attached to F(0) by a central stalk formed by the gamma and epsilon chains, while a peripheral stalk is formed by the delta and b chains.

It is found in the cell membrane. F(1)F(0) ATP synthase produces ATP from ADP in the presence of a proton or sodium gradient. F-type ATPases consist of two structural domains, F(1) containing the extramembraneous catalytic core and F(0) containing the membrane proton channel, linked together by a central stalk and a peripheral stalk. During catalysis, ATP synthesis in the catalytic domain of F(1) is coupled via a rotary mechanism of the central stalk subunits to proton translocation. In terms of biological role, this protein is part of the stalk that links CF(0) to CF(1). It either transmits conformational changes from CF(0) to CF(1) or is implicated in proton conduction. In Clostridium botulinum (strain Alaska E43 / Type E3), this protein is ATP synthase subunit delta.